A 55-amino-acid chain; its full sequence is Riparin-1.5 acid (55 aa).

Positions M1 to A15 are cleaved as a signal peptide. Residues Q16–R41 constitute a propeptide that is removed on maturation. Cysteines 47 and 53 form a disulfide. Residues N54–H55 constitute a propeptide that is removed on maturation.

Expressed by the skin glands.

The protein resides in the secreted. In Crinia riparia (Streambank froglet), this protein is Riparin-1.5 acid.